The following is a 565-amino-acid chain: Methionine--tRNA ligase (565 aa).

A 'HIGH' region motif is present at residues P16–N26. Positions 148, 151, 161, and 164 each coordinate Zn(2+). The short motif at K338–S342 is the 'KMSKS' region element. Residue K341 participates in ATP binding.

The protein belongs to the class-I aminoacyl-tRNA synthetase family. MetG type 1 subfamily. Requires Zn(2+) as cofactor.

Its subcellular location is the cytoplasm. The catalysed reaction is tRNA(Met) + L-methionine + ATP = L-methionyl-tRNA(Met) + AMP + diphosphate. In terms of biological role, is required not only for elongation of protein synthesis but also for the initiation of all mRNA translation through initiator tRNA(fMet) aminoacylation. The protein is Methionine--tRNA ligase of Thermofilum pendens (strain DSM 2475 / Hrk 5).